Reading from the N-terminus, the 88-residue chain is Probable small nuclear ribonucleoprotein F (88 aa).

In terms of domain architecture, Sm spans 7–79 (NPKPFLNNLT…VLYVRGVPED (73 aa)).

The protein belongs to the snRNP Sm proteins family. SmF/LSm6 subfamily.

The protein resides in the nucleus. In terms of biological role, probable common Sm protein, is found in U1 and U2 snRNPs and may be part of the spliceosome. This is Probable small nuclear ribonucleoprotein F from Arabidopsis thaliana (Mouse-ear cress).